Here is an 86-residue protein sequence, read N- to C-terminus: UPF0457 protein BCE33L2265 (86 aa).

This sequence belongs to the UPF0457 family.

The polypeptide is UPF0457 protein BCE33L2265 (Bacillus cereus (strain ZK / E33L)).